The sequence spans 459 residues: tRNA uridine(34) acetyltransferase (459 aa).

The radical S-adenosyl-L-methionine (rSAM) stretch occupies residues 1–278 (MKKLSRTISG…VPPYVRISRV (278 aa)). A Radical SAM core domain is found at 6–271 (RTISGVTPVA…IADIKALVPP (266 aa)). [4Fe-4S] cluster contacts are provided by C23, C27, and C30. Position 77 (K77) interacts with acetyl-CoA. The segment at 308-459 (QKCRCIRCRE…VAGYMCKHLD (152 aa)) is N-acetyltransferase. 3 residues coordinate Zn(2+): C310, C312, and C315. Residues 386-389 (ELHV), 409-411 (LGR), and Y442 contribute to the acetyl-CoA site.

This sequence belongs to the ELP3 family. In terms of assembly, homodimer. [4Fe-4S] cluster serves as cofactor.

The enzyme catalyses uridine(34) in tRNA + acetyl-CoA + S-adenosyl-L-methionine + H2O = 5-(carboxymethyl)uridine(34) in tRNA + 5'-deoxyadenosine + L-methionine + CoA + 2 H(+). The protein operates within tRNA modification. Functionally, tRNA uridine(34) acetyltransferase, which mediates formation of carboxymethyluridine in the wobble base at position 34 in tRNAs. The proposed mechanism is the following: (i) recruits S-adenosyl-L-methionine and cleaves it to generate a 5'-deoxyadenosine radical (5'-dA) in the radical S-adenosyl-L-methionine (rSAM) region, (ii) hydrolyzes acetyl-CoA in the N-acetyltransferase domain and (iii) an acetyl radical is formed by the products of the two domains and (iv) is transferred onto the C5 position of uridine(34) in the bound tRNA molecule. Does not show protein lysine acetyltransferase activity. In Dehalococcoides mccartyi (strain CBDB1), this protein is tRNA uridine(34) acetyltransferase.